The primary structure comprises 131 residues: Small ribosomal subunit protein uS11 (131 aa).

Belongs to the universal ribosomal protein uS11 family. In terms of assembly, part of the 30S ribosomal subunit. Interacts with proteins S7 and S18. Binds to IF-3.

Located on the platform of the 30S subunit, it bridges several disparate RNA helices of the 16S rRNA. Forms part of the Shine-Dalgarno cleft in the 70S ribosome. The polypeptide is Small ribosomal subunit protein uS11 (Clostridium acetobutylicum (strain ATCC 824 / DSM 792 / JCM 1419 / IAM 19013 / LMG 5710 / NBRC 13948 / NRRL B-527 / VKM B-1787 / 2291 / W)).